Consider the following 331-residue polypeptide: HPr kinase/phosphorylase (331 aa).

Residues histidine 153 and lysine 174 contribute to the active site. 168–175 is an ATP binding site; that stretch reads GKSGLGKS. Serine 175 serves as a coordination point for Mg(2+). The active-site Proton acceptor; for phosphorylation activity. Proton donor; for dephosphorylation activity is the aspartate 192. An important for the catalytic mechanism of both phosphorylation and dephosphorylation region spans residues 217–226; sequence MEIRGLGVVD. Mg(2+) is bound at residue glutamate 218. Residue arginine 259 is part of the active site. Residues 280–285 form an important for the catalytic mechanism of dephosphorylation region; it reads PIFPGK.

The protein belongs to the HPrK/P family. As to quaternary structure, homohexamer. It depends on Mg(2+) as a cofactor.

It carries out the reaction [HPr protein]-L-serine + ATP = [HPr protein]-O-phospho-L-serine + ADP + H(+). It catalyses the reaction [HPr protein]-O-phospho-L-serine + phosphate + H(+) = [HPr protein]-L-serine + diphosphate. Catalyzes the ATP- as well as the pyrophosphate-dependent phosphorylation of a specific serine residue in HPr, a phosphocarrier protein of the phosphoenolpyruvate-dependent sugar phosphotransferase system (PTS). HprK/P also catalyzes the pyrophosphate-producing, inorganic phosphate-dependent dephosphorylation (phosphorolysis) of seryl-phosphorylated HPr (P-Ser-HPr). The chain is HPr kinase/phosphorylase from Pelodictyon phaeoclathratiforme (strain DSM 5477 / BU-1).